The primary structure comprises 351 residues: Protein Tex24 (351 aa).

Disordered regions lie at residues 69 to 101, 117 to 144, and 275 to 298; these read PSTA…PSLS, PEDR…AQGK, and EKVK…PKSM. A compositionally biased stretch (basic residues) spans 73-83; the sequence is HGKRKPGHLPR. The span at 275–285 shows a compositional bias: basic and acidic residues; it reads EKVKPSSHDMH.

As to expression, specific to testis, where it is expressed in spermatogonia.

The protein localises to the nucleus. Its function is as follows. Nuclear factor which might have a role in spermatogenesis. The chain is Protein Tex24 from Mus musculus (Mouse).